We begin with the raw amino-acid sequence, 55 residues long: uncharacterized protein (55 aa).

The tract at residues 1-22 (MPALKSHVRPNSAAPARRQPWP) is disordered.

This is an uncharacterized protein from Rhodobacter capsulatus (Rhodopseudomonas capsulata).